The primary structure comprises 85 residues: Progonadoliberin-2 (85 aa).

An N-terminal signal peptide occupies residues 1 to 23 (MCVSRLALLLGLLLCVGAQLSFA). Pyrrolidone carboxylic acid is present on Gln-24. A Glycine amide modification is found at Gly-33.

Belongs to the GnRH family. As to expression, expressed in only one cell group in the mesencephalon.

The protein resides in the secreted. Its function is as follows. Stimulates the secretion of gonadotropins. In Haplochromis burtoni (Burton's mouthbrooder), this protein is Progonadoliberin-2 (gnrh2).